The primary structure comprises 259 residues: Protein unc-50 homolog B (259 aa).

Over residues 1–11 (MLPTTSVSPRS) the composition is skewed to polar residues. Positions 1–21 (MLPTTSVSPRSPDNGILSPRD) are disordered. Topologically, residues 1 to 82 (MLPTTSVSPR…TKDQWARDDP (82 aa)) are cytoplasmic. Residues 83–103 (AFLVLLGIWLCVSTVGFGFVL) form a helical membrane-spanning segment. Residues 104-109 (DMSFFE) are Lumenal-facing. Residues 110–130 (TFTLLLWVVFIDCVGVGLLIA) traverse the membrane as a helical segment. At 131–158 (TSMWFVSNKYMVNRQGKDYDVEWGYTFD) the chain is on the cytoplasmic side. Residues 159–179 (VHLNAFYPLLVILHFIQLFFI) traverse the membrane as a helical segment. The Lumenal segment spans residues 180-181 (NH). A helical membrane pass occupies residues 182 to 202 (VILTGWFIGCFVGNTLWLIAI). The Cytoplasmic portion of the chain corresponds to 203 to 222 (GYYIYITFLGYSALPFLKNT). Residues 223–243 (VVLLYPFAALALLYILSLALG) form a helical membrane-spanning segment. Residues 244 to 259 (WNFTAKLCLFYKYRVR) are Lumenal-facing.

Belongs to the unc-50 family.

Its subcellular location is the nucleus inner membrane. The protein resides in the golgi apparatus membrane. Involved in the cell surface expression of neuronal nicotinic receptors. Binds RNA. The polypeptide is Protein unc-50 homolog B (unc50-b) (Xenopus laevis (African clawed frog)).